The sequence spans 506 residues: Maturase K (506 aa).

This sequence belongs to the intron maturase 2 family. MatK subfamily.

The protein localises to the plastid. It localises to the chloroplast. In terms of biological role, usually encoded in the trnK tRNA gene intron. Probably assists in splicing its own and other chloroplast group II introns. This chain is Maturase K, found in Trifolium hirtum (Rose clover).